The following is a 158-amino-acid chain: Phosphopantetheine adenylyltransferase (158 aa).

A substrate-binding site is contributed by Thr9. ATP-binding positions include 9–10 (TF) and His17. Residues Lys41, Leu73, and Arg87 each contribute to the substrate site. Residues 88–90 (GVR), Glu98, and 123–129 (WSYVSST) each bind ATP.

It belongs to the bacterial CoaD family. Homohexamer. Mg(2+) serves as cofactor.

Its subcellular location is the cytoplasm. It catalyses the reaction (R)-4'-phosphopantetheine + ATP + H(+) = 3'-dephospho-CoA + diphosphate. Its pathway is cofactor biosynthesis; coenzyme A biosynthesis; CoA from (R)-pantothenate: step 4/5. Reversibly transfers an adenylyl group from ATP to 4'-phosphopantetheine, yielding dephospho-CoA (dPCoA) and pyrophosphate. This chain is Phosphopantetheine adenylyltransferase, found in Histophilus somni (strain 129Pt) (Haemophilus somnus).